Consider the following 346-residue polypeptide: Upstream stimulatory factor 2 (346 aa).

Disordered stretches follow at residues Met1–Glu44 and Ala215–Glu244. Over residues Ala11–Ala20 the composition is skewed to low complexity. Residues Asp226–Glu244 show a composition bias toward basic and acidic residues. One can recognise a bHLH domain in the interval Arg235 to Leu290. A leucine-zipper region spans residues Leu307–Leu328.

Efficient DNA binding requires dimerization with another bHLH protein. Binds DNA as a homodimer or a heterodimer (USF1/USF2). Interacts with MAF.

The protein localises to the nucleus. In terms of biological role, transcription factor that binds to a symmetrical DNA sequence (E-boxes) (5'-CACGTG-3') that is found in a variety of viral and cellular promoters. In Mus musculus (Mouse), this protein is Upstream stimulatory factor 2 (Usf2).